A 392-amino-acid polypeptide reads, in one-letter code: Bone morphogenetic protein 15 (392 aa).

Positions 1–25 are cleaved as a signal peptide; sequence MALLTILRILLWGVVLFMEQRVQMA. Residues 26-267 constitute a propeptide that is removed on maturation; the sequence is KPGWPSTALL…ESSFLMRSVR (242 aa). Asn85, Asn213, Asn236, Asn349, and Asn373 each carry an N-linked (GlcNAc...) asparagine glycan. 3 disulfides stabilise this stretch: Cys291–Cys357, Cys320–Cys389, and Cys324–Cys391.

It belongs to the TGF-beta family. Homodimer. But, in contrast to other members of this family, cannot be disulfide-linked. As to expression, ovary specific.

It is found in the secreted. Its function is as follows. May be involved in follicular development. Oocyte-specific growth/differentiation factor that stimulates folliculogenesis and granulosa cell (GC) growth. This is Bone morphogenetic protein 15 (Bmp15) from Mus musculus (Mouse).